A 197-amino-acid chain; its full sequence is Large ribosomal subunit protein bL17 (197 aa).

The segment at 120–197 (DVPPADTGQG…EEEESEEDNT (78 aa)) is disordered. A compositionally biased stretch (gly residues) spans 127–136 (GQGGSGGTRR). Acidic residues predominate over residues 159–197 (SSDEESESVEEDEATAEEASADAEQGEAEEEEESEEDNT).

This sequence belongs to the bacterial ribosomal protein bL17 family. In terms of assembly, part of the 50S ribosomal subunit. Contacts protein L32.

The protein is Large ribosomal subunit protein bL17 of Salinibacter ruber (strain DSM 13855 / M31).